The sequence spans 342 residues: Protein-glutamate methylesterase/protein-glutamine glutaminase 3 (342 aa).

A Response regulatory domain is found at arginine 3–arginine 120. 4-aspartylphosphate is present on aspartate 54. Residues aspartate 152–arginine 342 form the CheB-type methylesterase domain. Residues serine 164, histidine 191, and aspartate 285 contribute to the active site.

Belongs to the CheB family. Phosphorylated by CheA. Phosphorylation of the N-terminal regulatory domain activates the methylesterase activity.

It is found in the cytoplasm. It catalyses the reaction [protein]-L-glutamate 5-O-methyl ester + H2O = L-glutamyl-[protein] + methanol + H(+). The catalysed reaction is L-glutaminyl-[protein] + H2O = L-glutamyl-[protein] + NH4(+). Functionally, involved in chemotaxis. Part of a chemotaxis signal transduction system that modulates chemotaxis in response to various stimuli. Catalyzes the demethylation of specific methylglutamate residues introduced into the chemoreceptors (methyl-accepting chemotaxis proteins or MCP) by CheR. Also mediates the irreversible deamidation of specific glutamine residues to glutamic acid. The protein is Protein-glutamate methylesterase/protein-glutamine glutaminase 3 of Anaeromyxobacter dehalogenans (strain 2CP-C).